The sequence spans 811 residues: Transmembrane protease serine 6 (811 aa).

The disordered stretch occupies residues 1 to 48; that stretch reads MPRCFQLPCSTRMPTTEVPQAADGQGDAGDGEEAAEPEGKFKPPKNTK. Residues 1 to 59 are Cytoplasmic-facing; sequence MPRCFQLPCSTRMPTTEVPQAADGQGDAGDGEEAAEPEGKFKPPKNTKRKNRDYVRFTP. Positions 8–18 are enriched in polar residues; the sequence is PCSTRMPTTEV. A helical; Signal-anchor for type II membrane protein transmembrane segment spans residues 60-80; that stretch reads LLLVLAALVSAGVMLWYFLGY. The Extracellular portion of the chain corresponds to 81–811; the sequence is KAEVTVSQVY…VINWIQQVLT (731 aa). Positions 86-209 constitute an SEA domain; it reads VSQVYSGSLR…EGLVILEASV (124 aa). Residues Asn138, Asn184, Asn216, Asn338, Asn433, and Asn453 are each glycosylated (N-linked (GlcNAc...) asparagine). CUB domains follow at residues 213–336 and 323–440; these read VVLN…QDCQ and FLLS…QISL. Cys335 and Cys366 are joined by a disulfide. LDL-receptor class A domains lie at 445–477, 478–514, and 518–555; these read VQVY…CDGI, KDCP…DRQP, and NGSD…DGQS. Cystine bridges form between Cys458–Cys470, Cys464–Cys480, Cys474–Cys489, Cys491–Cys503, Cys497–Cys516, Cys510–Cys525, Cys531–Cys543, Cys538–Cys557, Cys551–Cys566, and Cys602–Cys618. Residue Asn518 is glycosylated (N-linked (GlcNAc...) asparagine). Positions 577-811 constitute a Peptidase S1 domain; the sequence is IVGGTVSSEG…VINWIQQVLT (235 aa). Catalysis depends on charge relay system residues His617 and Asp668. 3 disulfide bridges follow: Cys702–Cys768, Cys733–Cys747, and Cys758–Cys787. The active-site Charge relay system is the Ser762.

The protein belongs to the peptidase S1 family. Interacts with HJV. In terms of processing, the single-chain zymogen undergoes autoproteolytic processing. This results in TMPRSS6 shedding from the cell surface and conversion into an activated two-chains form which is released extracellularly. The process involves a trans-activation mechanism that requires TMPRSS6 oligomerization. As to expression, expressed at highest levels in adult mice liver, kidney and uterus. Also strongly expressed within the nasal cavity by olfactory epithelial cells. A weak, but detectable, signal in adult mice tissues analyzed including brain, lung, heart, kidney, spleen, muscle, intestine, thymus and pancreas. No signal in residual embryonic yolk sac, developing kidney tubules or in embryonic tissues analyzed including lung, heart, gastrointestinal tract and epithelium of the oral cavity.

The protein localises to the cell membrane. Membrane-bound serine protease. Through the cleavage of cell surface HJV, a regulator of the expression of the iron absorption-regulating hormone hepicidin/HAMP, plays a role in iron homeostasis. The chain is Transmembrane protease serine 6 (Tmprss6) from Mus musculus (Mouse).